A 237-amino-acid polypeptide reads, in one-letter code: 2-C-methyl-D-erythritol 4-phosphate cytidylyltransferase (237 aa).

It belongs to the IspD/TarI cytidylyltransferase family. IspD subfamily.

It carries out the reaction 2-C-methyl-D-erythritol 4-phosphate + CTP + H(+) = 4-CDP-2-C-methyl-D-erythritol + diphosphate. Its pathway is isoprenoid biosynthesis; isopentenyl diphosphate biosynthesis via DXP pathway; isopentenyl diphosphate from 1-deoxy-D-xylulose 5-phosphate: step 2/6. Catalyzes the formation of 4-diphosphocytidyl-2-C-methyl-D-erythritol from CTP and 2-C-methyl-D-erythritol 4-phosphate (MEP). This chain is 2-C-methyl-D-erythritol 4-phosphate cytidylyltransferase, found in Paraburkholderia xenovorans (strain LB400).